Here is a 102-residue protein sequence, read N- to C-terminus: Large ribosomal subunit protein uL24 (102 aa).

Belongs to the universal ribosomal protein uL24 family. Part of the 50S ribosomal subunit.

Its function is as follows. One of two assembly initiator proteins, it binds directly to the 5'-end of the 23S rRNA, where it nucleates assembly of the 50S subunit. Functionally, one of the proteins that surrounds the polypeptide exit tunnel on the outside of the subunit. The polypeptide is Large ribosomal subunit protein uL24 (Rhizobium rhizogenes (strain K84 / ATCC BAA-868) (Agrobacterium radiobacter)).